The sequence spans 225 residues: Potassium-transporting ATPase KdpC subunit (225 aa).

The helical transmembrane segment at 18–38 (ALLVLTVVTGIVYPLVVTGVA) threads the bilayer. The disordered stretch occupies residues 134–161 (NSVPGHPVRPEDVPADAVTSSGSGLDPD).

This sequence belongs to the KdpC family. In terms of assembly, the system is composed of three essential subunits: KdpA, KdpB and KdpC.

Its subcellular location is the cell membrane. Functionally, part of the high-affinity ATP-driven potassium transport (or Kdp) system, which catalyzes the hydrolysis of ATP coupled with the electrogenic transport of potassium into the cytoplasm. This subunit acts as a catalytic chaperone that increases the ATP-binding affinity of the ATP-hydrolyzing subunit KdpB by the formation of a transient KdpB/KdpC/ATP ternary complex. This chain is Potassium-transporting ATPase KdpC subunit, found in Streptomyces coelicolor (strain ATCC BAA-471 / A3(2) / M145).